The following is a 357-amino-acid chain: Geranylgeranyl pyrophosphate synthase spyE (357 aa).

The segment at 36–60 (EAQSQAVPGTRTETEPTGSSPSDLQ) is disordered. Polar residues predominate over residues 50–59 (EPTGSSPSDL). Positions 84, 87, and 116 each coordinate isopentenyl diphosphate. Mg(2+) is bound by residues Asp123 and Asp127. Arg132 is a dimethylallyl diphosphate binding site. An isopentenyl diphosphate-binding site is contributed by Arg133. 3 residues coordinate dimethylallyl diphosphate: Lys210, Thr211, and Gln244. A Mg(2+)-binding site is contributed by Asp247. 3 residues coordinate dimethylallyl diphosphate: Asn251, Lys261, and Lys271.

This sequence belongs to the FPP/GGPP synthase family. The cofactor is Mg(2+).

The enzyme catalyses isopentenyl diphosphate + dimethylallyl diphosphate = (2E)-geranyl diphosphate + diphosphate. The catalysed reaction is isopentenyl diphosphate + (2E)-geranyl diphosphate = (2E,6E)-farnesyl diphosphate + diphosphate. It carries out the reaction isopentenyl diphosphate + (2E,6E)-farnesyl diphosphate = (2E,6E,10E)-geranylgeranyl diphosphate + diphosphate. Its pathway is secondary metabolite biosynthesis; terpenoid biosynthesis. Functionally, geranylgeranyl pyrophosphate synthase; part of the gene cluster that mediates the biosynthesis of meroterpenoids called sartorypyrones. Within the pathway, spyE provides the spyF cosubstrate geranylgeranyl pyrophosphate (GGPP) for the prenylation of triacetic acid lactone (TAL). The biosynthesis of sartorypyrones begins with the production of triacetic acid lactone (TAL) by the NR-PKS spyA using one molecule of acetyl-CoA and two molecules of malonyl-CoA. The prenyltransferase spyF then conjugates geranylgeranyl pyrophosphate (GGPP) to TAL to form geranylgeranyl-triacetate lactone, for which the pathway-specific geranylgeranyl pyrophosphate synthase (GGPS) spyE is required to provide GGPP. Subsequently, geranylgeranyl-triacetate lactone is epoxidized at the terminal olein by the FAD-dependent monooxygenase spyC, followed by cyclization of the terpenoid component catalyzed by the terpene cyclase spyD to produce both the bicyclic sartorypyrone F and the monocyclic sartorypyrone D. Finally, the last step of the biosynthesis involves the acetylation of the meroterpenoids sartorypyrones D and F by the acetyltransferase SpyB to produce sartorypyrones A and G, respectively. The polypeptide is Geranylgeranyl pyrophosphate synthase spyE (Aspergillus fumigatus (strain ATCC MYA-4609 / CBS 101355 / FGSC A1100 / Af293) (Neosartorya fumigata)).